The primary structure comprises 143 residues: Fido domain-containing protein DDB_G0283145 (143 aa).

One can recognise a Fido domain in the interval 1–128 (MKGIIVSDGV…TSHLALIILN (128 aa)). Residues 49–69 (SSPYAVAAWLLHAFVSIHPFI) form a helical membrane-spanning segment.

Its subcellular location is the membrane. This is Fido domain-containing protein DDB_G0283145 from Dictyostelium discoideum (Social amoeba).